The sequence spans 142 residues: Hemoglobin subunit zeta (142 aa).

Ser-2 carries the N-acetylserine modification. Positions 2-142 (SLMKNERAII…LSSILTEKYR (141 aa)) constitute a Globin domain. Residue Thr-29 is modified to Phosphothreonine. Ser-53 bears the Phosphoserine mark. His-59 contacts heme b. Ser-73 is modified (phosphoserine). His-88 is a heme b binding site.

This sequence belongs to the globin family. As to quaternary structure, heterotetramer of two zeta chains and beta-type chains.

In terms of biological role, the zeta chain is an alpha-type chain of mammalian embryonic hemoglobin. This is Hemoglobin subunit zeta (Hbz) from Mus musculus (Mouse).